A 400-amino-acid chain; its full sequence is Phosphoglycerate kinase (400 aa).

Residues 19-21 (DLN), arginine 38, 61-64 (HLGR), arginine 124, and arginine 161 each bind substrate. ATP is bound by residues lysine 211, glycine 299, glutamate 330, and 356 to 359 (GGDS).

This sequence belongs to the phosphoglycerate kinase family. Monomer.

The protein localises to the cytoplasm. It carries out the reaction (2R)-3-phosphoglycerate + ATP = (2R)-3-phospho-glyceroyl phosphate + ADP. Its pathway is carbohydrate degradation; glycolysis; pyruvate from D-glyceraldehyde 3-phosphate: step 2/5. This Frankia alni (strain DSM 45986 / CECT 9034 / ACN14a) protein is Phosphoglycerate kinase.